We begin with the raw amino-acid sequence, 401 residues long: tRNA(Met) cytidine acetate ligase (401 aa).

ATP is bound by residues 7-20 (IVEYNPLHNGHLYH), G102, N164, and R189.

The protein belongs to the TmcAL family.

Its subcellular location is the cytoplasm. The enzyme catalyses cytidine(34) in elongator tRNA(Met) + acetate + ATP = N(4)-acetylcytidine(34) in elongator tRNA(Met) + AMP + diphosphate. Catalyzes the formation of N(4)-acetylcytidine (ac(4)C) at the wobble position of elongator tRNA(Met), using acetate and ATP as substrates. First activates an acetate ion to form acetyladenylate (Ac-AMP) and then transfers the acetyl group to tRNA to form ac(4)C34. In Caldanaerobacter subterraneus subsp. tengcongensis (strain DSM 15242 / JCM 11007 / NBRC 100824 / MB4) (Thermoanaerobacter tengcongensis), this protein is tRNA(Met) cytidine acetate ligase.